We begin with the raw amino-acid sequence, 318 residues long: Pyrimidine-specific ribonucleoside hydrolase RihA (318 aa).

The active site involves histidine 240.

Belongs to the IUNH family. RihA subfamily.

Hydrolyzes cytidine or uridine to ribose and cytosine or uracil, respectively. This is Pyrimidine-specific ribonucleoside hydrolase RihA from Shewanella sp. (strain ANA-3).